We begin with the raw amino-acid sequence, 291 residues long: Phosphatidylglycerol--prolipoprotein diacylglyceryl transferase (291 aa).

The next 7 helical transmembrane spans lie at 21 to 41 (VSLH…MWLA), 60 to 80 (LLYA…VLFY), 96 to 116 (WDGG…MIWF), 130 to 150 (FIAP…FING), 198 to 218 (SQLY…NLFI), 225 to 245 (GAVS…VEFF), and 260 to 280 (ISMG…MMIW). Position 143 (Arg143) interacts with a 1,2-diacyl-sn-glycero-3-phospho-(1'-sn-glycerol).

This sequence belongs to the Lgt family.

Its subcellular location is the cell inner membrane. It catalyses the reaction L-cysteinyl-[prolipoprotein] + a 1,2-diacyl-sn-glycero-3-phospho-(1'-sn-glycerol) = an S-1,2-diacyl-sn-glyceryl-L-cysteinyl-[prolipoprotein] + sn-glycerol 1-phosphate + H(+). Its pathway is protein modification; lipoprotein biosynthesis (diacylglyceryl transfer). Functionally, catalyzes the transfer of the diacylglyceryl group from phosphatidylglycerol to the sulfhydryl group of the N-terminal cysteine of a prolipoprotein, the first step in the formation of mature lipoproteins. This Cronobacter sakazakii (strain ATCC BAA-894) (Enterobacter sakazakii) protein is Phosphatidylglycerol--prolipoprotein diacylglyceryl transferase.